A 141-amino-acid polypeptide reads, in one-letter code: Large ribosomal subunit protein uL11 (141 aa).

Belongs to the universal ribosomal protein uL11 family. In terms of assembly, part of the ribosomal stalk of the 50S ribosomal subunit. Interacts with L10 and the large rRNA to form the base of the stalk. L10 forms an elongated spine to which L12 dimers bind in a sequential fashion forming a multimeric L10(L12)X complex. Post-translationally, one or more lysine residues are methylated.

Forms part of the ribosomal stalk which helps the ribosome interact with GTP-bound translation factors. The protein is Large ribosomal subunit protein uL11 of Chlorobium luteolum (strain DSM 273 / BCRC 81028 / 2530) (Pelodictyon luteolum).